We begin with the raw amino-acid sequence, 383 residues long: Acetylornithine deacetylase (383 aa).

H80 lines the Zn(2+) pocket. Residue D82 is part of the active site. D112 serves as a coordination point for Zn(2+). E144 is a catalytic residue. Zn(2+) is bound by residues E145, E169, and H355.

It belongs to the peptidase M20A family. ArgE subfamily. As to quaternary structure, homodimer. It depends on Zn(2+) as a cofactor. Co(2+) serves as cofactor. Glutathione is required as a cofactor.

The protein localises to the cytoplasm. The catalysed reaction is N(2)-acetyl-L-ornithine + H2O = L-ornithine + acetate. It participates in amino-acid biosynthesis; L-arginine biosynthesis; L-ornithine from N(2)-acetyl-L-ornithine (linear): step 1/1. Functionally, catalyzes the hydrolysis of the amide bond of N(2)-acetylated L-amino acids. Cleaves the acetyl group from N-acetyl-L-ornithine to form L-ornithine, an intermediate in L-arginine biosynthesis pathway, and a branchpoint in the synthesis of polyamines. The polypeptide is Acetylornithine deacetylase (Pectobacterium carotovorum subsp. carotovorum (strain PC1)).